Consider the following 950-residue polypeptide: Protocadherin alpha-13 (950 aa).

The N-terminal stretch at 1-29 (MLSSWQGGPRPRQLLLWLLILAAWETGSG) is a signal peptide. Residues 30–697 (QLHYSVPEEA…GPEAALVDVN (668 aa)) lie on the Extracellular side of the membrane. Cadherin domains follow at residues 34–133 (SVPE…PPIF), 134–242 (PESK…APEF), 243–350 (YQSV…APEV), 351–455 (TITS…APAF), 456–565 (AQPE…APAL), and 581–678 (MPRS…APQA). 2 N-linked (GlcNAc...) asparagine glycosylation sites follow: Asn-257 and Asn-265. Asn-548 carries N-linked (GlcNAc...) asparagine glycosylation. Residues 698–718 (VYLIIAICAVSSLLVLTLLLY) traverse the membrane as a helical segment. Over 719–950 (TALRCSAPPT…GNSTTDNSDQ (232 aa)) the chain is Cytoplasmic. PXXP repeat units lie at residues 734–737 (PGKP), 774–777 (PSLP), 799–802 (PRQP), 832–835 (PGGP), 873–876 (PGNP), and 891–894 (PGSP). The segment at 734–894 (PGKPTLVCSS…PDKFIIPGSP (161 aa)) is 6 X 4 AA repeats of P-X-X-P. Disordered stretches follow at residues 780–806 (LGSA…NPDW) and 829–950 (RAGP…NSDQ). Over residues 787–800 (GQREEDSECLKEPR) the composition is skewed to basic and acidic residues. Basic and acidic residues predominate over residues 909 to 923 (DKSDFITFGKKEETK).

It localises to the cell membrane. Functionally, potential calcium-dependent cell-adhesion protein. May be involved in the establishment and maintenance of specific neuronal connections in the brain. The chain is Protocadherin alpha-13 (PCDHA13) from Homo sapiens (Human).